Consider the following 361-residue polypeptide: uncharacterized protein (361 aa).

The first 19 residues, 1–19 (MNLVICVLLLSIWKNNCMT), serve as a signal peptide directing secretion. The Extracellular segment spans residues 20–47 (TNQTNGSSTTGDKPVESMQTKLNYLRRN). Asn-24 carries N-linked (GlcNAc...) asparagine glycosylation. Residues 48–68 (LLILVGIIIMVFVFICFCYLH) form a helical membrane-spanning segment. The Cytoplasmic segment spans residues 69 to 361 (YNCLSDDASK…QVTSEVTLND (293 aa)). Residues 99–113 (AKTASQCSPETQPML) are compositionally biased toward polar residues. 3 disordered regions span residues 99 to 184 (AKTA…KAHK), 209 to 247 (PPQL…NPKR), and 295 to 316 (QNLH…LDSR). A compositionally biased stretch (low complexity) spans 114–133 (STADKSSDSSSPERASAQSS). A compositionally biased stretch (polar residues) spans 141–150 (SSLQKPSIPN). Over residues 299 to 308 (VSSKVKSSSR) the composition is skewed to low complexity.

Its subcellular location is the membrane. This is an uncharacterized protein from Homo sapiens (Human).